Here is a 366-residue protein sequence, read N- to C-terminus: Inactive protein RESTRICTED TEV MOVEMENT 2 (366 aa).

Residues 14 to 121 (VQYEDFVPKS…LPETSRTEAA (108 aa)) form the sHSP domain. The A-1 repeat unit spans residues 129–133 (LEEKR). The interval 129–220 (LEEKRLLEES…LEERRLEERK (92 aa)) is 6 X 5 AA repeats A of L-E-E-[SKR]-[ERK]. An A-2 repeat occupies 135–139 (LEESR). An A-3 repeat occupies 156-160 (LEEKE). The B-1 repeat unit spans residues 163–176 (IRKLQEEAKAKEEA). A 3 X 14 AA repeats B of [IMA]-[RK]-K-L-Q-E-E-A-K-A-K-E-[EK]-[LA] region spans residues 163-206 (IRKLQEEAKAKEEAEMRKLQEEAKANEEAAAKKLQEEIEAKEKL). A B-2 repeat occupies 178 to 191 (MRKLQEEAKANEEA). One copy of the B-3 repeat lies at 193 to 205 (AKKLQEEIEAKEK). The A-4 repeat unit spans residues 206 to 210 (LEERK). The stretch at 211-215 (LEERR) is one A-5 repeat. Residues 216-220 (LEERK) form an A-6 repeat. The helical transmembrane segment at 322-342 (LMMNVGVAALVIFALGAYVSY) threads the bilayer. Residues 345-366 (CSSSSSSSSSSPSSSSSSTKPE) are disordered. Residues 346 to 366 (SSSSSSSSSSPSSSSSSTKPE) show a composition bias toward low complexity.

It belongs to the small heat shock protein (HSP20) family.

The protein resides in the cell membrane. Seems to not be involved in heat resistance. Unable to mediate restriction of long-distance movement of the pathogenic tobacco etch virus (TEV) without causing a hypersensitive response or inducing systemic acquired resistance. This is Inactive protein RESTRICTED TEV MOVEMENT 2 (RTM2) from Arabidopsis thaliana (Mouse-ear cress).